A 102-amino-acid polypeptide reads, in one-letter code: Small ribosomal subunit protein uS10 (102 aa).

This sequence belongs to the universal ribosomal protein uS10 family. Part of the 30S ribosomal subunit.

Involved in the binding of tRNA to the ribosomes. The polypeptide is Small ribosomal subunit protein uS10 (Caulobacter sp. (strain K31)).